A 414-amino-acid polypeptide reads, in one-letter code: Capsid protein (414 aa).

Over residues 1 to 14 the composition is skewed to polar residues; the sequence is MTSNGSQPQASTPM. Disordered regions lie at residues 1–60, 94–127, and 148–212; these read MTSN…APTA, AQNE…ASMN, and YPTF…NTGG. Low complexity-rich tracts occupy residues 15 to 27 and 38 to 60; these read VSAE…ASVP and PAAA…APTA. 3 stretches are compositionally biased toward polar residues: residues 113-127, 153-166, and 185-197; these read LPSS…ASMN, GSGS…QRIF, and QATS…TPFT.

The protein resides in the virion. The polypeptide is Capsid protein (Crataegus (hawthorn)).